The sequence spans 170 residues: UPF0316 protein CLJ_B0679 (170 aa).

2 helical membrane-spanning segments follow: residues 1–21 (MLSY…LMTI) and 36–56 (IIGF…LSGI).

It belongs to the UPF0316 family.

The protein resides in the cell membrane. The sequence is that of UPF0316 protein CLJ_B0679 from Clostridium botulinum (strain 657 / Type Ba4).